The chain runs to 487 residues: ATP-dependent 6-phosphofructokinase (487 aa).

Residues Gly107, 173 to 174 (RG), 198 to 201 (GDGT), and Lys226 contribute to the ATP site. Position 199 (Asp199) interacts with Mg(2+). Residues 227–229 (TID), 272–274 (MGR), and Glu325 contribute to the substrate site. Asp229 acts as the Proton acceptor in catalysis. 341–343 (SGN) serves as a coordination point for ATP. Residue 380 to 383 (YMIR) participates in substrate binding. The Peroxisomal targeting signal motif lies at 485–487 (AKL).

Belongs to the phosphofructokinase type A (PFKA) family. PPi-dependent PFK group II subfamily. Atypical ATP-dependent clade 'X' sub-subfamily. In terms of assembly, homotetramer. Mg(2+) serves as cofactor.

The protein resides in the glycosome. The enzyme catalyses beta-D-fructose 6-phosphate + ATP = beta-D-fructose 1,6-bisphosphate + ADP + H(+). It participates in carbohydrate degradation; glycolysis; D-glyceraldehyde 3-phosphate and glycerone phosphate from D-glucose: step 3/4. Its activity is regulated as follows. Allosterically activated by AMP. Functionally, catalyzes the phosphorylation of D-fructose 6-phosphate to fructose 1,6-bisphosphate by ATP, the first committing step of glycolysis. The sequence is that of ATP-dependent 6-phosphofructokinase from Trypanosoma brucei brucei.